A 235-amino-acid chain; its full sequence is Phosphoribosylaminoimidazole-succinocarboxamide synthase (235 aa).

This sequence belongs to the SAICAR synthetase family.

It catalyses the reaction 5-amino-1-(5-phospho-D-ribosyl)imidazole-4-carboxylate + L-aspartate + ATP = (2S)-2-[5-amino-1-(5-phospho-beta-D-ribosyl)imidazole-4-carboxamido]succinate + ADP + phosphate + 2 H(+). It participates in purine metabolism; IMP biosynthesis via de novo pathway; 5-amino-1-(5-phospho-D-ribosyl)imidazole-4-carboxamide from 5-amino-1-(5-phospho-D-ribosyl)imidazole-4-carboxylate: step 1/2. This is Phosphoribosylaminoimidazole-succinocarboxamide synthase from Sulfolobus acidocaldarius (strain ATCC 33909 / DSM 639 / JCM 8929 / NBRC 15157 / NCIMB 11770).